The sequence spans 186 residues: Ribosome-recycling factor (186 aa).

A disordered region spans residues 144 to 163 (EKDGVIGQDESRAQSERVQK).

This sequence belongs to the RRF family.

The protein localises to the cytoplasm. Its function is as follows. Responsible for the release of ribosomes from messenger RNA at the termination of protein biosynthesis. May increase the efficiency of translation by recycling ribosomes from one round of translation to another. This is Ribosome-recycling factor from Rhizobium johnstonii (strain DSM 114642 / LMG 32736 / 3841) (Rhizobium leguminosarum bv. viciae).